A 186-amino-acid chain; its full sequence is Ribosome-recycling factor (186 aa).

Belongs to the RRF family.

The protein resides in the cytoplasm. Responsible for the release of ribosomes from messenger RNA at the termination of protein biosynthesis. May increase the efficiency of translation by recycling ribosomes from one round of translation to another. In Paraburkholderia phymatum (strain DSM 17167 / CIP 108236 / LMG 21445 / STM815) (Burkholderia phymatum), this protein is Ribosome-recycling factor.